A 137-amino-acid chain; its full sequence is Putative pre-16S rRNA nuclease (137 aa).

It belongs to the YqgF nuclease family.

It is found in the cytoplasm. In terms of biological role, could be a nuclease involved in processing of the 5'-end of pre-16S rRNA. The chain is Putative pre-16S rRNA nuclease from Clostridium botulinum (strain Eklund 17B / Type B).